Reading from the N-terminus, the 376-residue chain is Chaperone protein DnaJ (376 aa).

The J domain occupies aspartate 5 to glycine 70. Residues glycine 136–threonine 214 form a CR-type zinc finger. 8 residues coordinate Zn(2+): cysteine 149, cysteine 152, cysteine 166, cysteine 169, cysteine 188, cysteine 191, cysteine 202, and cysteine 205. CXXCXGXG motif repeat units lie at residues cysteine 149–glycine 156, cysteine 166–glycine 173, cysteine 188–glycine 195, and cysteine 202–glycine 209.

The protein belongs to the DnaJ family. As to quaternary structure, homodimer. Requires Zn(2+) as cofactor.

It localises to the cytoplasm. Its function is as follows. Participates actively in the response to hyperosmotic and heat shock by preventing the aggregation of stress-denatured proteins and by disaggregating proteins, also in an autonomous, DnaK-independent fashion. Unfolded proteins bind initially to DnaJ; upon interaction with the DnaJ-bound protein, DnaK hydrolyzes its bound ATP, resulting in the formation of a stable complex. GrpE releases ADP from DnaK; ATP binding to DnaK triggers the release of the substrate protein, thus completing the reaction cycle. Several rounds of ATP-dependent interactions between DnaJ, DnaK and GrpE are required for fully efficient folding. Also involved, together with DnaK and GrpE, in the DNA replication of plasmids through activation of initiation proteins. The protein is Chaperone protein DnaJ of Burkholderia pseudomallei (strain 1710b).